Reading from the N-terminus, the 478-residue chain is Pyrrolysine--tRNA ligase (478 aa).

A disordered region spans residues 106-188 (VMPKSVARTP…TSAMPASTSA (83 aa)). Residues 122–132 (APVQTLPSESQ) show a composition bias toward polar residues. A compositionally biased stretch (low complexity) spans 133 to 188 (PAPTTPISASTTAPASTSTTAPAPASTTAPAPASTTAPASASTTISTSAMPASTSA).

Belongs to the class-II aminoacyl-tRNA synthetase family.

It localises to the cytoplasm. It catalyses the reaction tRNA(Pyl) + L-pyrrolysine + ATP = L-pyrrolysyl-tRNA(Pyl) + AMP + diphosphate. Its function is as follows. Catalyzes the attachment of pyrrolysine to tRNA(Pyl). Pyrrolysine is a lysine derivative encoded by the termination codon UAG. The sequence is that of Pyrrolysine--tRNA ligase from Methanosarcina thermophila.